Here is a 511-residue protein sequence, read N- to C-terminus: Histidine ammonia-lyase (511 aa).

The segment at residues 143–145 (ASG) is a cross-link (5-imidazolinone (Ala-Gly)). Ser-144 bears the 2,3-didehydroalanine (Ser) mark.

It belongs to the PAL/histidase family. Post-translationally, contains an active site 4-methylidene-imidazol-5-one (MIO), which is formed autocatalytically by cyclization and dehydration of residues Ala-Ser-Gly.

The protein localises to the cytoplasm. It catalyses the reaction L-histidine = trans-urocanate + NH4(+). It participates in amino-acid degradation; L-histidine degradation into L-glutamate; N-formimidoyl-L-glutamate from L-histidine: step 1/3. This Vibrio parahaemolyticus serotype O3:K6 (strain RIMD 2210633) protein is Histidine ammonia-lyase.